The sequence spans 150 residues: Flagellar assembly factor FliW (150 aa).

It belongs to the FliW family. Interacts with translational regulator CsrA. Interacts with flagellins FlaB1, FlaB2 and FlaB3.

The protein resides in the cytoplasm. Functionally, acts as an anti-CsrA protein, binds CsrA and prevents it from repressing translation of its target genes, one of which is flagellin. Binds to flagellin and participates in the assembly of the flagellum. Binds to the C-terminal region of flagellin, which is implicated in polymerization, and participates in the assembly of the flagellum. This Treponema pallidum (strain Nichols) protein is Flagellar assembly factor FliW.